The sequence spans 801 residues: Phenylalanine--tRNA ligase beta subunit (801 aa).

In terms of domain architecture, tRNA-binding spans glycine 39–phenylalanine 147. Residues valine 401–threonine 477 enclose the B5 domain. Residues aspartate 455, aspartate 461, glutamate 464, and glutamate 465 each coordinate Mg(2+). The region spanning serine 708–arginine 801 is the FDX-ACB domain.

The protein belongs to the phenylalanyl-tRNA synthetase beta subunit family. Type 1 subfamily. Tetramer of two alpha and two beta subunits. Requires Mg(2+) as cofactor.

The protein resides in the cytoplasm. It carries out the reaction tRNA(Phe) + L-phenylalanine + ATP = L-phenylalanyl-tRNA(Phe) + AMP + diphosphate + H(+). This Geobacter sulfurreducens (strain ATCC 51573 / DSM 12127 / PCA) protein is Phenylalanine--tRNA ligase beta subunit.